We begin with the raw amino-acid sequence, 379 residues long: Homoserine O-acetyltransferase (379 aa).

Positions 45 to 355 (NAILILHALT…PHGHDAFLIE (311 aa)) constitute an AB hydrolase-1 domain. The active-site Nucleophile is S151. Residue R220 participates in substrate binding. Residues D316 and H349 contribute to the active site. D350 is a substrate binding site.

It belongs to the AB hydrolase superfamily. MetX family. In terms of assembly, homodimer.

Its subcellular location is the cytoplasm. It catalyses the reaction L-homoserine + acetyl-CoA = O-acetyl-L-homoserine + CoA. Its pathway is amino-acid biosynthesis; L-methionine biosynthesis via de novo pathway; O-acetyl-L-homoserine from L-homoserine: step 1/1. Transfers an acetyl group from acetyl-CoA to L-homoserine, forming acetyl-L-homoserine. In Carboxydothermus hydrogenoformans (strain ATCC BAA-161 / DSM 6008 / Z-2901), this protein is Homoserine O-acetyltransferase.